The following is a 71-amino-acid chain: Protein CYSTEINE-RICH TRANSMEMBRANE MODULE 6 (71 aa).

The span at Met1–Ala12 shows a compositional bias: polar residues. The segment at Met1–Thr36 is disordered. A compositionally biased stretch (pro residues) spans Pro14 to Gly30. Residues Ser48–Cys64 traverse the membrane as a helical segment.

It belongs to the CYSTM1 family. As to quaternary structure, homodimer and heterodimers. Interacts with CYSTM7 and WIH1/CYSTM13. In terms of tissue distribution, mostly expressed in roots, stems, rosette leaves and siliques and, to a lower extent, in flowers and cauline leaves.

It localises to the cell membrane. Its subcellular location is the cytoplasm. Involved in resistance to abiotic stress. In Arabidopsis thaliana (Mouse-ear cress), this protein is Protein CYSTEINE-RICH TRANSMEMBRANE MODULE 6.